Here is a 320-residue protein sequence, read N- to C-terminus: Lipoyl synthase (320 aa).

The span at 1 to 29 shows a compositional bias: basic and acidic residues; the sequence is MIGKLVRDLKIPDQRHPEKAHRPDNDQPR. The tract at residues 1-32 is disordered; it reads MIGKLVRDLKIPDQRHPEKAHRPDNDQPRKPS. Residues Cys60, Cys65, Cys71, Cys86, Cys90, Cys93, and Ser300 each contribute to the [4Fe-4S] cluster site. The Radical SAM core domain occupies 71–289; that stretch reads CWGQGHATMM…EKAAYGKGFL (219 aa).

It belongs to the radical SAM superfamily. Lipoyl synthase family. The cofactor is [4Fe-4S] cluster.

Its subcellular location is the cytoplasm. The enzyme catalyses [[Fe-S] cluster scaffold protein carrying a second [4Fe-4S](2+) cluster] + N(6)-octanoyl-L-lysyl-[protein] + 2 oxidized [2Fe-2S]-[ferredoxin] + 2 S-adenosyl-L-methionine + 4 H(+) = [[Fe-S] cluster scaffold protein] + N(6)-[(R)-dihydrolipoyl]-L-lysyl-[protein] + 4 Fe(3+) + 2 hydrogen sulfide + 2 5'-deoxyadenosine + 2 L-methionine + 2 reduced [2Fe-2S]-[ferredoxin]. Its pathway is protein modification; protein lipoylation via endogenous pathway; protein N(6)-(lipoyl)lysine from octanoyl-[acyl-carrier-protein]: step 2/2. Its function is as follows. Catalyzes the radical-mediated insertion of two sulfur atoms into the C-6 and C-8 positions of the octanoyl moiety bound to the lipoyl domains of lipoate-dependent enzymes, thereby converting the octanoylated domains into lipoylated derivatives. The polypeptide is Lipoyl synthase (Cereibacter sphaeroides (strain ATCC 17025 / ATH 2.4.3) (Rhodobacter sphaeroides)).